The following is a 1214-amino-acid chain: MQLKTMPKKKPLSAGRAPLFLFLCQMISALDVPLDPKLLDDLVQPPTITQQSPKDYIIDPRENIVIQCEAKGKPPPSFSWTRNGTHFDIDKDPLVTMKPGSGTLVINIMSEGKAETYEGVYQCTARNERGAAVSNNIVVRPSRSPLWTKERLEPIILRSGQSLVLPCRPPIGLPPAIIFWMDNSFQRLPQSERVSQGLNGDLYFSNVLPEDTREDYICYARFNHTQTIQQKQPISLKVISVDELNDTIAANLSDTEFYGAKSSKERPPTFLTPEGNESHKEELRGNVLSLECIAEGLPTPVIYWIKEDGTLPVNRTFYRNFKKTLQIIHVSEADSGNYQCIAKNALGAVHHTISVTVKAAPYWIVAPHNLVLSPGENGTLICRANGNPKPRISWLTNGVPVEIALDDPSRKIDGDTIMFSNVQESSSAVYQCNASNKYGYLLANAFVNVLAEPPRILTSANTLYQVIANRPALLDCAFFGSPMPTIEWFKGTKGSALHEDIYVLHDNGTLEIPVAQKDSTGTYTCVARNKLGMAKNEVHLEIKDPTRFIKQPGYAVVQRGSKVSFECKVKHDHTLIPTILWLKDNGELPNDERFSVDKDHLVVSDVKDEDGGTYTCAANTTLDSVSASAVLRVVAPTPTPAPIYDVPNPPFDLELTNQLDKSVQLTWTPGDDNNSPITKFIIEYEDAMHEAGLWRHQAEVSGTQTTAQLKLSPYVNYSFRVMAENSIGRSVPSEASEQYLTKAAEPDQNPTAVEGLGTEPDNLVITWKPLNGFQSNGPGLQYKVSWRQKDGDDEWTSVVVANVSKYIVSGTPTFVPYLIKVQALNDVGFAPEPAAVMGHSGEDLPMVAPGNVRVSVVNSTLAEAHWDPVPPKSVRGHLQGYRIYYWKAQSSSKRNRRHIEKKILTFQGSKTHGMLPGLQPYSHYVLNVRVVNGKGEGPASADRGFHTPEGVPSAPSSLKIVNPTLDSLTLEWDPPSHPNGILTEYILKYQPINSTHELGPLVDLKIPANKTRWTLKNLNFSTRYKFYFYAQTSVGSGSQITEEAITTVDEGKKAGILPPDVGAGKAMASRQVDIATQGWFIGLMCAVALLILILLIVCFIRRNKGGKYPVKEKEDAHADPEIQPMKEDDGTFGEYSDAEDHKPLKKGSRTPSDRTVKKEDSDDSLVDYGEGVNGQFNEDGSFIGQYSGKKEKEPAEGNESSEAPSPVNAMNSFV.

The signal sequence occupies residues 1 to 29; it reads MQLKTMPKKKPLSAGRAPLFLFLCQMISA. The Extracellular segment spans residues 30–1077; the sequence is LDVPLDPKLL…ASRQVDIATQ (1048 aa). Ig-like C2-type domains are found at residues 46 to 134 and 141 to 235; these read PTIT…AAVS and PSRS…QPIS. 2 disulfides stabilise this stretch: Cys68–Cys123 and Cys167–Cys218. The N-linked (GlcNAc...) asparagine glycan is linked to Asn83. N-linked (GlcNAc...) asparagine glycosylation is found at Asn223, Asn245, Asn251, Asn276, Asn314, and Asn377. 4 Ig-like C2-type domains span residues 267–356, 361–448, 454–541, and 545–626; these read PPTF…ISVT, PYWI…AFVN, PRIL…VHLE, and PTRF…DSVS. Cys292 and Cys340 are oxidised to a cystine. A disulfide bridge links Cys382 with Cys432. Residues Asn433 and Asn507 are each glycosylated (N-linked (GlcNAc...) asparagine). 2 cysteine pairs are disulfide-bonded: Cys476-Cys525 and Cys567-Cys616. N-linked (GlcNAc...) asparagine glycans are attached at residues Asn619, Asn716, Asn802, Asn858, Asn993, Asn1009, and Asn1019. Fibronectin type-III domains follow at residues 649 to 744, 746 to 843, 848 to 950, and 954 to 1051; these read PPFD…TKAA, PDQN…SGED, APGN…TPEG, and APSS…VDEG. The chain crosses the membrane as a helical span at residues 1078-1100; that stretch reads GWFIGLMCAVALLILILLIVCFI. At 1101 to 1214 the chain is on the cytoplasmic side; it reads RRNKGGKYPV…SPVNAMNSFV (114 aa). The segment covering 1109-1129 has biased composition (basic and acidic residues); it reads PVKEKEDAHADPEIQPMKEDD. Residues 1109–1214 are disordered; it reads PVKEKEDAHA…SPVNAMNSFV (106 aa). Thr1131 is subject to Phosphothreonine. Residue Tyr1135 is modified to Phosphotyrosine. Ser1136 is modified (phosphoserine). A compositionally biased stretch (basic and acidic residues) spans 1151-1160; it reads PSDRTVKKED. A phosphoserine mark is found at Ser1161, Ser1164, Ser1181, Ser1200, Ser1201, and Ser1205. The segment covering 1198-1214 has biased composition (polar residues); it reads NESSEAPSPVNAMNSFV.

The protein belongs to the immunoglobulin superfamily. L1/neurofascin/NgCAM family. Constituent of a NFASC/NRCAM/ankyrin-G complex. Detected in a complex with CNTN1 and PTPRB. Interacts with MYOC. Interacts with GLDN. In terms of tissue distribution, detected in cerebellum Purkinje cells. Detected on nodes of Ranvier and unmyelinated axons in sciatic nerve (at protein level).

It localises to the cell membrane. The protein resides in the cell projection. Its subcellular location is the axon. It is found in the secreted. In terms of biological role, cell adhesion protein that is required for normal responses to cell-cell contacts in brain and in the peripheral nervous system. Plays a role in neurite outgrowth in response to contactin binding. Plays a role in mediating cell-cell contacts between Schwann cells and axons. Plays a role in the formation and maintenance of the nodes of Ranvier on myelinated axons. Nodes of Ranvier contain clustered sodium channels that are crucial for the saltatory propagation of action potentials along myelinated axons. During development, nodes of Ranvier are formed by the fusion of two heminodes. Required for normal clustering of sodium channels at heminodes; not required for the formation of mature nodes with normal sodium channel clusters. Required, together with GLDN, for maintaining NFASC and sodium channel clusters at mature nodes of Ranvier. This chain is Neuronal cell adhesion molecule (Nrcam), found in Rattus norvegicus (Rat).